Consider the following 82-residue polypeptide: uncharacterized protein (82 aa).

The disordered stretch occupies residues Leu-22–Gly-82. Residues His-47 to Glu-58 are compositionally biased toward basic and acidic residues. The segment covering Trp-73–Gly-82 has biased composition (pro residues).

This is an uncharacterized protein from Homo sapiens (Human).